The chain runs to 341 residues: Fructose-1,6-bisphosphatase, cytosolic (341 aa).

Glu71, Glu100, Asp121, Leu123, and Asp124 together coordinate Mg(2+). Substrate-binding positions include Asp124–Ser127, Asn215, Tyr247, Tyr267, and Lys277. Glu283 provides a ligand contact to Mg(2+).

It belongs to the FBPase class 1 family. Mg(2+) is required as a cofactor.

The protein resides in the cytoplasm. It catalyses the reaction beta-D-fructose 1,6-bisphosphate + H2O = beta-D-fructose 6-phosphate + phosphate. This chain is Fructose-1,6-bisphosphatase, cytosolic, found in Spinacia oleracea (Spinach).